We begin with the raw amino-acid sequence, 405 residues long: Formate-dependent phosphoribosylglycinamide formyltransferase (405 aa).

N(1)-(5-phospho-beta-D-ribosyl)glycinamide is bound by residues 22 to 23 (EL) and E82. ATP is bound by residues R115, K162, 167–172 (SSGKGQ), 202–205 (EGFI), and E210. The 201-residue stretch at 120–320 (RLAAETLGLA…EFELHARAIL (201 aa)) folds into the ATP-grasp domain. Mg(2+) is bound by residues E279 and E291. Residues D298, K367, and 374 to 375 (RR) contribute to the N(1)-(5-phospho-beta-D-ribosyl)glycinamide site.

This sequence belongs to the PurK/PurT family. In terms of assembly, homodimer.

The enzyme catalyses N(1)-(5-phospho-beta-D-ribosyl)glycinamide + formate + ATP = N(2)-formyl-N(1)-(5-phospho-beta-D-ribosyl)glycinamide + ADP + phosphate + H(+). It participates in purine metabolism; IMP biosynthesis via de novo pathway; N(2)-formyl-N(1)-(5-phospho-D-ribosyl)glycinamide from N(1)-(5-phospho-D-ribosyl)glycinamide (formate route): step 1/1. Functionally, involved in the de novo purine biosynthesis. Catalyzes the transfer of formate to 5-phospho-ribosyl-glycinamide (GAR), producing 5-phospho-ribosyl-N-formylglycinamide (FGAR). Formate is provided by PurU via hydrolysis of 10-formyl-tetrahydrofolate. This Delftia acidovorans (strain DSM 14801 / SPH-1) protein is Formate-dependent phosphoribosylglycinamide formyltransferase.